The chain runs to 260 residues: Phytolongin Phyl2.1 (260 aa).

The Longin domain occupies C12–Q114. The chain crosses the membrane as a helical; Anchor for type IV membrane protein span at residues W231–I251.

It belongs to the synaptobrevin family.

It is found in the membrane. Functionally, non-SNARE longin protein involved in membrane-trafficking machinery. This chain is Phytolongin Phyl2.1, found in Arabidopsis thaliana (Mouse-ear cress).